The chain runs to 253 residues: Indole-3-glycerol phosphate synthase (253 aa).

It belongs to the TrpC family.

The enzyme catalyses 1-(2-carboxyphenylamino)-1-deoxy-D-ribulose 5-phosphate + H(+) = (1S,2R)-1-C-(indol-3-yl)glycerol 3-phosphate + CO2 + H2O. The protein operates within amino-acid biosynthesis; L-tryptophan biosynthesis; L-tryptophan from chorismate: step 4/5. In Bacillus cereus (strain B4264), this protein is Indole-3-glycerol phosphate synthase.